Reading from the N-terminus, the 488-residue chain is 3-octaprenyl-4-hydroxybenzoate carboxy-lyase (488 aa).

Residue Asn172 coordinates Mn(2+). Prenylated FMN-binding positions include 175 to 177, 189 to 191, and 194 to 195; these read IYR, RWL, and RG. Glu238 serves as a coordination point for Mn(2+). Asp287 functions as the Proton donor in the catalytic mechanism.

The protein belongs to the UbiD family. In terms of assembly, homohexamer. The cofactor is prenylated FMN. Mn(2+) serves as cofactor.

It is found in the cell membrane. The catalysed reaction is a 4-hydroxy-3-(all-trans-polyprenyl)benzoate + H(+) = a 2-(all-trans-polyprenyl)phenol + CO2. It participates in cofactor biosynthesis; ubiquinone biosynthesis. Functionally, catalyzes the decarboxylation of 3-octaprenyl-4-hydroxy benzoate to 2-octaprenylphenol, an intermediate step in ubiquinone biosynthesis. The sequence is that of 3-octaprenyl-4-hydroxybenzoate carboxy-lyase from Pseudomonas syringae pv. syringae (strain B728a).